Reading from the N-terminus, the 158-residue chain is Transcription elongation factor GreA (158 aa).

A coiled-coil region spans residues 53–75 (AKERQGQVEATIGDLEDKLSRAQ).

Belongs to the GreA/GreB family.

In terms of biological role, necessary for efficient RNA polymerase transcription elongation past template-encoded arresting sites. The arresting sites in DNA have the property of trapping a certain fraction of elongating RNA polymerases that pass through, resulting in locked ternary complexes. Cleavage of the nascent transcript by cleavage factors such as GreA or GreB allows the resumption of elongation from the new 3'terminus. GreA releases sequences of 2 to 3 nucleotides. The polypeptide is Transcription elongation factor GreA (Sphingopyxis alaskensis (strain DSM 13593 / LMG 18877 / RB2256) (Sphingomonas alaskensis)).